Here is a 498-residue protein sequence, read N- to C-terminus: ATP synthase subunit alpha 1 (498 aa).

The protein belongs to the ATPase alpha/beta chains family. As to quaternary structure, F-type ATPases have 2 components, CF(1) - the catalytic core - and CF(0) - the membrane proton channel. CF(1) has five subunits: alpha(3), beta(3), gamma(1), delta(1), epsilon(1). CF(0) has three main subunits: a(1), b(2) and c(9-12). The alpha and beta chains form an alternating ring which encloses part of the gamma chain. CF(1) is attached to CF(0) by a central stalk formed by the gamma and epsilon chains, while a peripheral stalk is formed by the delta and b chains.

The protein resides in the cell membrane. The enzyme catalyses ATP + H2O + 4 H(+)(in) = ADP + phosphate + 5 H(+)(out). In terms of biological role, produces ATP from ADP in the presence of a proton gradient across the membrane. The alpha chain is a regulatory subunit. In Listeria monocytogenes serovar 1/2a (strain ATCC BAA-679 / EGD-e), this protein is ATP synthase subunit alpha 1.